The sequence spans 4423 residues: Nonribosomal peptide synthetase 7 (4423 aa).

The tract at residues 572–986 is condensation 1; it reads NIYPCTSIQE…LISQDDKNRI (415 aa). The segment at 1007-1404 is adenylation 1; the sequence is ERIQKQPSAV…GRRDTQVKIR (398 aa). Residues 1533–1609 form the Carrier 1 domain; the sequence is LPLTETEQKL…DLARTIDERN (77 aa). Ser1570 is modified (O-(pantetheine 4'-phosphoryl)serine). Residues 1657 to 2066 are condensation 2; the sequence is EDVYPCTSLQ…QFLDETHHET (410 aa). Residues 2102–2499 form an adenylation 2 region; the sequence is RDVAKEQPDS…YIGRMGSEVK (398 aa). The region spanning 2642–2718 is the Carrier 2 domain; the sequence is VPQTRIGKKL…DCARILEADQ (77 aa). The residue at position 2679 (Ser2679) is an O-(pantetheine 4'-phosphoryl)serine. The interval 2764–3170 is condensation 3; sequence EDVYPCTPMQ…AASASSDDQT (407 aa). Residues 3205-3609 are adenylation 3; the sequence is RSLETRPDSQ…GRGDSQIKIR (405 aa). The Carrier 3 domain occupies 3731–3804; sequence TESEYITRTL…KMAVVAQHQT (74 aa). O-(pantetheine 4'-phosphoryl)serine is present on Ser3765. Positions 3875 to 4278 are condensation 4; sequence TFVLDAEGDL…SQDEKLALLG (404 aa). Over residues 4288 to 4300 the composition is skewed to polar residues; the sequence is KLTKLQRVNSPKE. Positions 4288 to 4312 are disordered; it reads KLTKLQRVNSPKEQTLRKDKPTNGV.

It belongs to the NRP synthetase family.

It functions in the pathway secondary metabolite biosynthesis. Functionally, nonribosomal peptide synthetase; part of the gene cluster that mediates the biosynthesis of the lipopeptide fusaristatin A. Fusaristatin A consists of a polyketide chain linked to three amino acid residues glutamine (Gln), dehydroalanine (dehydro-Ala), and beta-aminoisobutyric acid. The biosynthesis starts with formation of a linear polyketide chain by the highly reducing polyketide synthase PKS6. The gene cluster does not contain an acyl-CoA ligase or an acyl-transferase, and it is therefore predicted that the polyketide is transferred directly to the nonribosomal peptide synthetase NRPS7. Modules 1-3 from NRPS7 incorporate dehydro-Ala, Gln, and beta-aminoisobutyric acid in the compound, which is released by cyclization. The beta-aminoisobutyric acid units are most likely not freely available to the NRPS, but can be synthesized from thymine, which requires a dehydrogenase, a monooxygenase, and an aminotransferase. The fusaristatin A cluster contains a cytochrome P450 monooxygenase (FGSG_08207) and an aminotransferase (FGSG_17085), which theoretically can perform two of the enzymatic steps. The enzymes may however also be involved in biosynthesis of dehydroalanine or modification of the polyketide. The dehydro-Ala residue can be a result of cyclization, where serine is dehydrated. The last gene of the cluster encodes a protein with an A/B barrel domain found in variable enzymes, which hampers functional prediction. In Gibberella zeae (strain ATCC MYA-4620 / CBS 123657 / FGSC 9075 / NRRL 31084 / PH-1) (Wheat head blight fungus), this protein is Nonribosomal peptide synthetase 7.